The sequence spans 423 residues: Keratin, type I cytoskeletal 18 (423 aa).

Position 2 is an N-acetylserine (serine 2). Residues 2 to 71 (SFTTRSTTFS…GLAGMGGIQT (70 aa)) form a head region. 4 positions are modified to phosphoserine: serine 7, serine 11, serine 16, and serine 19. A phosphoserine; alternate mark is found at serine 31 and serine 32. 2 O-linked (GlcNAc) serine; alternate glycosylation sites follow: serine 31 and serine 32. Residue serine 35 is modified to Phosphoserine. Tyrosine 37 carries the phosphotyrosine modification. Phosphoserine is present on serine 43. Omega-N-methylarginine is present on arginine 46. Residue serine 50 is modified to Phosphoserine; alternate. A glycan (O-linked (GlcNAc) serine; alternate) is linked at serine 50. Position 52 is a phosphoserine; by MAPKAPK2 and MAPKAPK3 (serine 52). Phosphoserine occurs at positions 57 and 60. Residues 62 to 366 (GLAGMGGIQT…EALLNIKVKL (305 aa)) form a necessary for interaction with PNN region. The tract at residues 69 to 121 (IQTEKETMQDLNDRLASYLDKVKSLETENRRLESKIREHLEKKGPQGVRDWGH) is interaction with TRADD. The interval 72-107 (EKETMQDLNDRLASYLDKVKSLETENRRLESKIREH) is coil 1A. The IF rod domain maps to 72-384 (EKETMQDLND…RLLEDGEDFS (313 aa)). Lysine 73 participates in a covalent cross-link: Glycyl lysine isopeptide (Lys-Gly) (interchain with G-Cter in SUMO2). A phosphoserine mark is found at serine 85 and serine 92. Positions 108-125 (LEKKGPQGVRDWGHYFKI) are linker 1. Lysine 124 carries the post-translational modification N6-acetyllysine. Residues 126–217 (IEDLRAQIFA…KNHEEEVQGL (92 aa)) form a coil 1B region. 2 positions are modified to phosphoserine: serine 137 and serine 170. The linker 12 stretch occupies residues 218 to 241 (EAQIASSGLTVEVDAPKSQDLSKI). Residues 236-384 (QDLSKIMADI…RLLEDGEDFS (149 aa)) form an interaction with DNAJB6 region. Residue lysine 240 forms a Glycyl lysine isopeptide (Lys-Gly) (interchain with G-Cter in SUMO2) linkage. The segment at 242–380 (MADIRAQYEA…ATYRRLLEDG (139 aa)) is coil 2. Phosphothreonine is present on threonine 295. A Phosphoserine modification is found at serine 316. Residues lysine 363 and lysine 365 each participate in a glycyl lysine isopeptide (Lys-Gly) (interchain with G-Cter in SUMO2) cross-link. The segment at 381-423 (EDFSLNDALDSSNSMQTVQKTTTRKIVDGRVVSETNDTRVLRH) is tail. Serine 384, serine 391, serine 392, and serine 394 each carry phosphoserine. Threonine 397 is modified (phosphothreonine).

This sequence belongs to the intermediate filament family. As to quaternary structure, heterotetramer of two type I and two type II keratins. KRT18 associates with KRT8. Interacts with PLEC isoform 1C, when in a heterodimer with KRT8. Interacts with PNN and mutated CFTR. Interacts with YWHAE, YWHAH and YWHAZ only when phosphorylated. Interacts with the thrombin-antithrombin complex. Interacts with DNAJB6, TCHP and TRADD. Interacts with FAM83H. Interacts with EPPK1. Interacts with PKP1 and PKP2. Phosphorylation increases by IL-6. In terms of processing, proteolytically cleaved by caspases during epithelial cell apoptosis. Cleavage occurs at Asp-231 by either caspase-3, caspas-6 or caspase-7. Post-translationally, O-GlcNAcylation increases solubility, and decreases stability by inducing proteasomal degradation. In terms of tissue distribution, expressed in endoderm, intestinal epithelial cells and in most extraembryonic tissues.

It is found in the nucleus matrix. The protein localises to the cytoplasm. The protein resides in the perinuclear region. Its subcellular location is the nucleus. It localises to the nucleolus. Functionally, when phosphorylated, plays a role in filament reorganization. Involved in the delivery of mutated CFTR to the plasma membrane. Involved in the uptake of thrombin-antithrombin complexes by hepatic cells. Together with KRT8, is involved in interleukin-6 (IL-6)-mediated barrier protection. This chain is Keratin, type I cytoskeletal 18 (Krt18), found in Mus musculus (Mouse).